The following is a 352-amino-acid chain: N-acetyl-gamma-glutamyl-phosphate reductase (352 aa).

Residue cysteine 155 is part of the active site.

It belongs to the NAGSA dehydrogenase family. Type 1 subfamily.

The protein localises to the cytoplasm. It catalyses the reaction N-acetyl-L-glutamate 5-semialdehyde + phosphate + NADP(+) = N-acetyl-L-glutamyl 5-phosphate + NADPH + H(+). It participates in amino-acid biosynthesis; L-arginine biosynthesis; N(2)-acetyl-L-ornithine from L-glutamate: step 3/4. In terms of biological role, catalyzes the NADPH-dependent reduction of N-acetyl-5-glutamyl phosphate to yield N-acetyl-L-glutamate 5-semialdehyde. The polypeptide is N-acetyl-gamma-glutamyl-phosphate reductase (Crocosphaera subtropica (strain ATCC 51142 / BH68) (Cyanothece sp. (strain ATCC 51142))).